Here is a 31-residue protein sequence, read N- to C-terminus: Cyclotide cter-E (31 aa).

Positions 1-31 (GIPCAESCVWIPCTVTALLGCSCKDKVCYLD) form a cross-link, cyclopeptide (Gly-Asp). 3 disulfides stabilise this stretch: cysteine 4–cysteine 21, cysteine 8–cysteine 23, and cysteine 13–cysteine 28.

In terms of processing, contains 3 disulfide bonds. This is a cyclic peptide.

In terms of biological role, probably participates in a plant defense mechanism. This is Cyclotide cter-E from Clitoria ternatea (Butterfly pea).